A 145-amino-acid chain; its full sequence is Superoxide dismutase [Mn/Fe] (145 aa).

2 residues coordinate Fe(3+): His-10 and His-64. Mn(2+) is bound by residues His-10 and His-64. Residues 126–145 (TSTANQDTPISEGKKPILGL) are disordered.

Belongs to the iron/manganese superoxide dismutase family. Requires Mn(2+) as cofactor. Fe(3+) is required as a cofactor.

The enzyme catalyses 2 superoxide + 2 H(+) = H2O2 + O2. Its function is as follows. Destroys superoxide anion radicals which are normally produced within the cells and which are toxic to biological systems. Catalyzes the dismutation of superoxide anion radicals into O2 and H2O2 by successive reduction and oxidation of the transition metal ion at the active site. This is Superoxide dismutase [Mn/Fe] (sodA) from Streptococcus mitis.